Reading from the N-terminus, the 40-residue chain is RapK inhibitor (40 aa).

2 propeptides span residues 1 to 34 and Gly-40; that span reads MKKLVLCVSILAVILSGVALTQLSTDSPSNIQVA.

It belongs to the Phr family. Post-translationally, contains a predicted signal peptide cleavage site in the N-terminal region, however the propeptide is probably only subject to processing events at the ends of the mature peptide.

It is found in the secreted. The protein localises to the cytoplasm. Signaling molecule involved in the regulation of genetic competence development. Secreted during production, but the mature peptide acts intracellularly, indicating that it needs to be imported into the cell to function. Stimulates expression of the genes controlled by ComA, a transcriptional factor that regulates the development of genetic competence. Acts by inhibiting RapK, which regulates the activity of ComA. The protein is RapK inhibitor (phrK) of Bacillus subtilis (strain 168).